We begin with the raw amino-acid sequence, 348 residues long: Dihydroorotase (348 aa).

Zn(2+) is bound by residues His-14 and His-16. Substrate is bound by residues 16–18 (HLR) and Asn-42. Zn(2+) is bound by residues Lys-100, His-137, and His-175. Lys-100 is subject to N6-carboxylysine. His-137 provides a ligand contact to substrate. Leu-220 is a binding site for substrate. A Zn(2+)-binding site is contributed by Asp-248. Asp-248 is a catalytic residue. Positions 252 and 264 each coordinate substrate.

This sequence belongs to the metallo-dependent hydrolases superfamily. DHOase family. Class II DHOase subfamily. As to quaternary structure, homodimer. It depends on Zn(2+) as a cofactor.

It catalyses the reaction (S)-dihydroorotate + H2O = N-carbamoyl-L-aspartate + H(+). The protein operates within pyrimidine metabolism; UMP biosynthesis via de novo pathway; (S)-dihydroorotate from bicarbonate: step 3/3. Catalyzes the reversible cyclization of carbamoyl aspartate to dihydroorotate. The protein is Dihydroorotase of Pseudomonas aeruginosa (strain LESB58).